A 218-amino-acid polypeptide reads, in one-letter code: Adenylate kinase (218 aa).

Residue 11–16 (GAGKGT) participates in ATP binding. An NMP region spans residues 31-60 (STGDMFREAMANKTKVGLEAKSYIDKGNLV). Residues Thr-32, Arg-37, 58-60 (NLV), 86-89 (GFPR), and Gln-93 each bind AMP. The LID stretch occupies residues 127 to 165 (ARYMCKNCGATYNKISKQPKVEGTCDRCGSHEFYQREDD). Residue Arg-128 coordinates ATP. 2 residues coordinate Zn(2+): Cys-131 and Cys-134. 137-138 (TY) contacts ATP. Zn(2+) is bound by residues Cys-151 and Cys-154. AMP contacts are provided by Arg-162 and Arg-173. Residue Gln-201 participates in ATP binding.

This sequence belongs to the adenylate kinase family. As to quaternary structure, monomer.

It is found in the cytoplasm. It catalyses the reaction AMP + ATP = 2 ADP. The protein operates within purine metabolism; AMP biosynthesis via salvage pathway; AMP from ADP: step 1/1. Functionally, catalyzes the reversible transfer of the terminal phosphate group between ATP and AMP. Plays an important role in cellular energy homeostasis and in adenine nucleotide metabolism. This is Adenylate kinase from Lactobacillus acidophilus (strain ATCC 700396 / NCK56 / N2 / NCFM).